We begin with the raw amino-acid sequence, 151 residues long: MKIVIQRVKSASVSIDGVIKGKINQGFLLLVGVEDADSNFDLDYAVRKIAQMRIFSDEADKMNLSVQDIQGEILSISQFTLYAETKKGNRPSFSAAGKPDFAKAMYEKFNDSLAQIVPVKAGVFGADMQVELINDGPVTIILDTKEARKNA.

The short motif at 136-137 (GP) is the Gly-cisPro motif, important for rejection of L-amino acids element.

This sequence belongs to the DTD family. In terms of assembly, homodimer.

The protein resides in the cytoplasm. It catalyses the reaction glycyl-tRNA(Ala) + H2O = tRNA(Ala) + glycine + H(+). The enzyme catalyses a D-aminoacyl-tRNA + H2O = a tRNA + a D-alpha-amino acid + H(+). An aminoacyl-tRNA editing enzyme that deacylates mischarged D-aminoacyl-tRNAs. Also deacylates mischarged glycyl-tRNA(Ala), protecting cells against glycine mischarging by AlaRS. Acts via tRNA-based rather than protein-based catalysis; rejects L-amino acids rather than detecting D-amino acids in the active site. By recycling D-aminoacyl-tRNA to D-amino acids and free tRNA molecules, this enzyme counteracts the toxicity associated with the formation of D-aminoacyl-tRNA entities in vivo and helps enforce protein L-homochirality. The sequence is that of D-aminoacyl-tRNA deacylase from Lactococcus lactis subsp. lactis (strain IL1403) (Streptococcus lactis).